The following is a 270-amino-acid chain: Chlorophyll a-b binding protein, chloroplastic (270 aa).

A chloroplast-targeting transit peptide spans 1-41 (MASACASSTIAAVAFSSPSSQKNGSIVGATKASFLGGKRLR). Position 68 (tryptophan 68) interacts with chlorophyll b. Chlorophyll a is bound by residues phenylalanine 88, glutamate 107, and histidine 110. Residue arginine 112 participates in chlorophyll b binding. A helical transmembrane segment spans residues 113–133 (WAMLGAAGIFIPEFLTKIGVL). Glutamine 144 serves as a coordination point for chlorophyll a. Residues 146-166 (YFTDTTTLFVIELVLIGWAEG) form a helical membrane-spanning segment. Chlorophyll b is bound by residues valine 155, glutamate 165, and arginine 168. 6 residues coordinate chlorophyll a: lysine 221, glutamate 222, asparagine 225, arginine 227, glutamine 239, and histidine 254. Residues 228–248 (LAMLAVMGAWFQHIYTGTGPI) traverse the membrane as a helical segment.

The protein belongs to the light-harvesting chlorophyll a/b-binding (LHC) protein family. In terms of assembly, the LHC complex consists of chlorophyll a-b binding proteins. The cofactor is Binds at least 14 chlorophylls (8 Chl-a and 6 Chl-b) and carotenoids such as lutein and neoxanthin.. Photoregulated by reversible phosphorylation of its threonine residues.

The protein localises to the plastid. Its subcellular location is the chloroplast thylakoid membrane. The light-harvesting complex (LHC) functions as a light receptor, it captures and delivers excitation energy to photosystems with which it is closely associated. The polypeptide is Chlorophyll a-b binding protein, chloroplastic (Petunia hybrida (Petunia)).